The sequence spans 240 residues: Ubiquinone biosynthesis O-methyltransferase (240 aa).

Positions 44, 64, 85, and 129 each coordinate S-adenosyl-L-methionine.

This sequence belongs to the methyltransferase superfamily. UbiG/COQ3 family.

It carries out the reaction a 3-demethylubiquinol + S-adenosyl-L-methionine = a ubiquinol + S-adenosyl-L-homocysteine + H(+). It catalyses the reaction a 3-(all-trans-polyprenyl)benzene-1,2-diol + S-adenosyl-L-methionine = a 2-methoxy-6-(all-trans-polyprenyl)phenol + S-adenosyl-L-homocysteine + H(+). The protein operates within cofactor biosynthesis; ubiquinone biosynthesis. O-methyltransferase that catalyzes the 2 O-methylation steps in the ubiquinone biosynthetic pathway. The sequence is that of Ubiquinone biosynthesis O-methyltransferase from Escherichia coli (strain UTI89 / UPEC).